Consider the following 1252-residue polypeptide: Calmodulin-regulated spectrin-associated protein 3 (1252 aa).

9 disordered regions span residues 183–205, 331–385, 429–457, 479–604, 638–697, 712–935, 962–981, 996–1030, and 1063–1114; these read KTEQ…SPAQ, HAVS…SMSH, SVSS…ESGD, GAAD…MSEL, FLQV…LGDY, QRDM…EAAR, TTRA…GDFT, DLDK…DDSA, and PNNL…TGPR. Position 184 is a phosphothreonine (T184). S193 is subject to Phosphoserine. The Calponin-homology (CH) domain maps to 203–312; that stretch reads PAQPSIRYRK…LVVLLAEMYM (110 aa). Residues S334, S347, S351, S368, S373, and S382 each carry the phosphoserine modification. A compositionally biased stretch (polar residues) spans 335–353; sequence PRNTETVPSQNNSGSSSPV. The span at 359–373 shows a compositional bias: low complexity; that stretch reads PLLSPGGPQSPLRGS. 3 stretches are compositionally biased toward polar residues: residues 374-383, 441-450, and 525-534; these read TGSLKSSPSM, VSTSSRNSAQ, and ENPSKSSPCS. Phosphoserine is present on residues S548, S555, and S561. Residues 569-580 show a composition bias toward basic and acidic residues; the sequence is AERKKQLVKAEA. Positions 595 to 629 form a coiled coil; sequence EALSSEMSELGARLEEKRRAIEAQKRRIEAIFAKH. A Phosphoserine modification is found at S683. Residues 696-727 adopt a coiled-coil conformation; it reads DYNRAVSKLSAALSSLQRDMQRLTDQQQRLLA. Residues 729 to 739 show a composition bias toward pro residues; the sequence is PEAPGPAPPPA. Low complexity predominate over residues 740 to 768; that stretch reads AWVIPGPATGPKAASPSPARRAPAARRSP. Phosphoserine is present on S767. T797 carries the phosphothreonine modification. Phosphoserine is present on residues S812 and S881. Residues 812–825 are compositionally biased toward polar residues; the sequence is SPSQVPVQTRSSIL. Positions 887–934 are enriched in basic and acidic residues; that stretch reads YKDEDKPEDEMAQKRASLLERQQRRVEEARRRKQWQEAEKEQKREEAA. A coiled-coil region spans residues 896-943; that stretch reads EMAQKRASLLERQQRRVEEARRRKQWQEAEKEQKREEAARLAQEAPGL. At S1077 the chain carries Phosphoserine. Positions 1112–1246 constitute a CKK domain; it reads GPRLYKEPSA…QSKKPTTPKK (135 aa).

This sequence belongs to the CAMSAP1 family. As to quaternary structure, interacts with PLEKHA7. Interacts with CAMSAP2. Interacts with KATNA1 and KATNB1; leading to regulate the length of CAMSAP3-decorated microtubule stretches. Interacts with AKAP9; regulating Golgi assembly in epithelial cells. Interacts with MACF1. Interacts with isoform C of CDH23; leading to inhibit CAMSAP3 ability to induce microtubule bundle formation. Interacts with AKNA. In terms of tissue distribution, expressed at the apical surface of respiratory epithelia, as well as in the acini of submucosal glands (at protein level). In cochlea, restricted to the organ of Corti and increases during development (at protein level). Highly expressed in both sensory hair cells and supporting cells.

The protein resides in the cytoplasm. It localises to the cytoskeleton. Its subcellular location is the cell junction. The protein localises to the adherens junction. It is found in the cilium axoneme. The protein resides in the cilium basal body. Functionally, key microtubule-organizing protein that specifically binds the minus-end of non-centrosomal microtubules and regulates their dynamics and organization. Specifically recognizes growing microtubule minus-ends and autonomously decorates and stabilizes microtubule lattice formed by microtubule minus-end polymerization. Acts on free microtubule minus-ends that are not capped by microtubule-nucleating proteins or other factors and protects microtubule minus-ends from depolymerization. In addition, it also reduces the velocity of microtubule polymerization. Required for the biogenesis and the maintenance of zonula adherens by anchoring the minus-end of microtubules to zonula adherens and by recruiting the kinesin KIFC3 to those junctional sites. Required for orienting the apical-to-basal polarity of microtubules in epithelial cells: acts by tethering non-centrosomal microtubules to the apical cortex, leading to their longitudinal orientation. Plays a key role in early embryos, which lack centrosomes: accumulates at the microtubule bridges that connect pairs of cells and enables the formation of a non-centrosomal microtubule-organizing center that directs intracellular transport in the early embryo. Couples non-centrosomal microtubules with actin: interaction with MACF1 at the minus ends of non-centrosomal microtubules, tethers the microtubules to actin filaments, regulating focal adhesion size and cell migration. Plays a key role in the generation of non-centrosomal microtubules by accumulating in the pericentrosomal region and cooperating with KATNA1 to release non-centrosomal microtubules from the centrosome. Through the microtubule cytoskeleton, also regulates the organization of cellular organelles including the Golgi and the early endosomes. Through interaction with AKAP9, involved in translocation of Golgi vesicles in epithelial cells, where microtubules are mainly non-centrosomal. Plays an important role in motile cilia function by facilitatating proper orientation of basal bodies and formation of central microtubule pairs in motile cilia. This Mus musculus (Mouse) protein is Calmodulin-regulated spectrin-associated protein 3.